We begin with the raw amino-acid sequence, 100 residues long: Integration host factor subunit alpha (100 aa).

This sequence belongs to the bacterial histone-like protein family. Heterodimer of an alpha and a beta chain.

In terms of biological role, this protein is one of the two subunits of integration host factor, a specific DNA-binding protein that functions in genetic recombination as well as in transcriptional and translational control. The protein is Integration host factor subunit alpha of Hahella chejuensis (strain KCTC 2396).